The following is a 173-amino-acid chain: dCTP deaminase, dUMP-forming (173 aa).

Residues 93-98, aspartate 111, 119-121, glutamine 138, and tyrosine 151 each bind dCTP; these read RSSTGR and TLE. Residue glutamate 121 is the Proton donor/acceptor of the active site.

It belongs to the dCTP deaminase family. As to quaternary structure, homotrimer.

It catalyses the reaction dCTP + 2 H2O = dUMP + NH4(+) + diphosphate. The protein operates within pyrimidine metabolism; dUMP biosynthesis; dUMP from dCTP: step 1/1. In terms of biological role, bifunctional enzyme that catalyzes both the deamination of dCTP to dUTP and the hydrolysis of dUTP to dUMP without releasing the toxic dUTP intermediate. This chain is dCTP deaminase, dUMP-forming, found in Clostridium beijerinckii (strain ATCC 51743 / NCIMB 8052) (Clostridium acetobutylicum).